Reading from the N-terminus, the 716-residue chain is Polyribonucleotide nucleotidyltransferase (716 aa).

Aspartate 488 and aspartate 494 together coordinate Mg(2+). Residues 555-614 (PKIETITIPTDKIREVIGTGGKVIREIVATTGAKVDINDEGTVKVSASDGAKIKAAIDWI) enclose the KH domain. Positions 624–692 (GAIYDGKVVK…DRGKTKLSMK (69 aa)) constitute an S1 motif domain. The segment at 695–716 (DQETGEDLSKKEAVSPEEAVNT) is disordered.

The protein belongs to the polyribonucleotide nucleotidyltransferase family. Mg(2+) is required as a cofactor.

The protein localises to the cytoplasm. The catalysed reaction is RNA(n+1) + phosphate = RNA(n) + a ribonucleoside 5'-diphosphate. In terms of biological role, involved in mRNA degradation. Catalyzes the phosphorolysis of single-stranded polyribonucleotides processively in the 3'- to 5'-direction. The sequence is that of Polyribonucleotide nucleotidyltransferase from Caulobacter sp. (strain K31).